The sequence spans 214 residues: Dephospho-CoA kinase (214 aa).

In terms of domain architecture, DPCK spans 3-202; it reads KIGLTGGIGS…DRWLALAGAA (200 aa). Residue 11–16 coordinates ATP; that stretch reads GSGKSR.

The protein belongs to the CoaE family.

The protein resides in the cytoplasm. It carries out the reaction 3'-dephospho-CoA + ATP = ADP + CoA + H(+). The protein operates within cofactor biosynthesis; coenzyme A biosynthesis; CoA from (R)-pantothenate: step 5/5. Its function is as follows. Catalyzes the phosphorylation of the 3'-hydroxyl group of dephosphocoenzyme A to form coenzyme A. This chain is Dephospho-CoA kinase, found in Bordetella bronchiseptica (strain ATCC BAA-588 / NCTC 13252 / RB50) (Alcaligenes bronchisepticus).